Reading from the N-terminus, the 456-residue chain is Acetylcholine receptor subunit alpha (456 aa).

An N-terminal signal peptide occupies residues 1–20; sequence MNYFILILPILPYLYGPAVC. Residues 21–230 lie on the Extracellular side of the membrane; sequence SEDETRLVKT…ITYHFLLLRL (210 aa). Intrachain disulfides connect Cys148/Cys162 and Cys212/Cys213. N-linked (GlcNAc...) asparagine glycosylation is present at Asn161. 3 consecutive transmembrane segments (helical) span residues 231–255, 263–281, and 297–316; these read PLYFIVNVIIPCMLFSFLTGLVFYL, MTLSISVLLSLTVFLLVIV, and YMLFTMIFVIASIIITVIVI. Residues 317 to 428 are Cytoplasmic-facing; sequence NTHHRSPSTH…WKFVAMVLDH (112 aa). A helical membrane pass occupies residues 429 to 447; that stretch reads ILLCVFMAVCIIGTLGVFA.

It belongs to the ligand-gated ion channel (TC 1.A.9) family. Acetylcholine receptor (TC 1.A.9.1) subfamily. Alpha-1/CHRNA1 sub-subfamily. One of the alpha chains that assemble within the acetylcholine receptor, a pentamer of two alpha chains, a beta, a delta, and a gamma or epsilon chains.

It localises to the postsynaptic cell membrane. Its subcellular location is the cell membrane. The enzyme catalyses K(+)(in) = K(+)(out). The catalysed reaction is Na(+)(in) = Na(+)(out). In terms of biological role, upon acetylcholine binding, the AChR responds by an extensive change in conformation that affects all subunits and leads to opening of an ion-conducting channel across the plasma membrane. In Danio rerio (Zebrafish), this protein is Acetylcholine receptor subunit alpha (chrna1).